The sequence spans 631 residues: tRNA uridine 5-carboxymethylaminomethyl modification enzyme MnmG (631 aa).

Residues 13 to 18 (GGGHAG), Val-125, and Ser-180 contribute to the FAD site. 273 to 287 (GPRYCPSIEDKVMRF) is an NAD(+) binding site. Gln-370 provides a ligand contact to FAD.

Belongs to the MnmG family. Homodimer. Heterotetramer of two MnmE and two MnmG subunits. FAD serves as cofactor.

The protein resides in the cytoplasm. In terms of biological role, NAD-binding protein involved in the addition of a carboxymethylaminomethyl (cmnm) group at the wobble position (U34) of certain tRNAs, forming tRNA-cmnm(5)s(2)U34. This Vibrio atlanticus (strain LGP32) (Vibrio splendidus (strain Mel32)) protein is tRNA uridine 5-carboxymethylaminomethyl modification enzyme MnmG.